Reading from the N-terminus, the 218-residue chain is Superoxide dismutase [Mn], mitochondrial (218 aa).

A mitochondrion-targeting transit peptide spans 1–21; the sequence is MLRFLSKNSVAAIRNVSIARG. The Mn(2+) site is built by His50 and His96. Position 129 is a phosphoserine (Ser129). Positions 181 and 185 each coordinate Mn(2+).

This sequence belongs to the iron/manganese superoxide dismutase family. In terms of assembly, homodimer. Mn(2+) serves as cofactor.

The protein localises to the mitochondrion matrix. It carries out the reaction 2 superoxide + 2 H(+) = H2O2 + O2. Its function is as follows. Destroys superoxide anion radicals which are normally produced within the cells and which are toxic to biological systems. The polypeptide is Superoxide dismutase [Mn], mitochondrial (sod2) (Schizosaccharomyces pombe (strain 972 / ATCC 24843) (Fission yeast)).